Consider the following 296-residue polypeptide: mRNA export factor rsm1 (296 aa).

A C3HC-type zinc finger spans residues proline 40 to threonine 174.

It is found in the cytoplasm. The protein localises to the nucleus. Involved in the export of mRNA from the nucleus to the cytoplasm. This is mRNA export factor rsm1 (rsm1) from Schizosaccharomyces pombe (strain 972 / ATCC 24843) (Fission yeast).